Consider the following 112-residue polypeptide: Protein lin-52 homolog (112 aa).

It belongs to the lin-52 family. As to quaternary structure, component of the DREAM complex.

The polypeptide is Protein lin-52 homolog (lin52) (Tetraodon nigroviridis (Spotted green pufferfish)).